The chain runs to 480 residues: Gasdermin-C4 (480 aa).

The triggers pyroptosis stretch occupies residues 1-226; sequence MGYSFDRASK…TCVILPSATK (226 aa).

Belongs to the gasdermin family. As to quaternary structure, homooligomer; homooligomeric ring-shaped pore complex containing 27-28 subunits when inserted in the membrane. Post-translationally, cleavage by CASP8 relieves autoinhibition by releasing the N-terminal moiety (Gasdermin-C4, N-terminal) that initiates pyroptosis. Palmitoylated.

It localises to the cytoplasm. It is found in the cytosol. Its subcellular location is the cell membrane. With respect to regulation, the full-length protein before cleavage is inactive: intramolecular interactions between N- and C-terminal domains mediate autoinhibition in the absence of activation signal. The intrinsic pyroptosis-inducing activity is carried by the released N-terminal moiety (Gasdermin-C4, N-terminal) following cleavage by caspase CASP8. Its function is as follows. This form constitutes the precursor of the pore-forming protein: upon cleavage, the released N-terminal moiety (Gasdermin-C4, N-terminal) binds to membranes and forms pores, triggering pyroptosis. In terms of biological role, pore-forming protein that causes membrane permeabilization and pyroptosis. Produced by the cleavage of gasdermin-C4 by caspase CASP8 in response to death signals. After cleavage, moves to the plasma membrane where it strongly binds to membrane inner leaflet lipids. Homooligomerizes within the membrane and forms pores of 10-15 nanometers (nm) of inner diameter, triggering pyroptosis. This Mus musculus (Mouse) protein is Gasdermin-C4.